A 983-amino-acid polypeptide reads, in one-letter code: UPF0182 protein MLBr00644 (983 aa).

The next 7 membrane-spanning stretches (helical) occupy residues Leu19–Ala39, Val63–Val83, Leu113–Tyr133, Phe175–Ile195, Leu210–Asp230, Lys259–Leu279, and Ile287–Val307.

Belongs to the UPF0182 family.

It localises to the cell membrane. This is UPF0182 protein MLBr00644 from Mycobacterium leprae (strain Br4923).